We begin with the raw amino-acid sequence, 490 residues long: Transmembrane protease serine 2 (490 aa).

Residues 1-83 (MALNSGSPPG…ALCTSKSKKS (83 aa)) lie on the Cytoplasmic side of the membrane. The helical; Signal-anchor for type II membrane protein transmembrane segment at 84 to 104 (LCLALALGTVLTGAAVAAVLL) threads the bilayer. The Extracellular segment spans residues 105–490 (WRFWDSNCST…WIYQQMRANS (386 aa)). Residue Asn-111 is glycosylated (N-linked (GlcNAc...) asparagine). The 39-residue stretch at 111–149 (NCSTSEMECGSSGTCISSSLWCDGVAHCPNGEDENRCVR) folds into the LDL-receptor class A domain. 9 disulfide bridges follow: Cys-112-Cys-125, Cys-119-Cys-138, Cys-132-Cys-147, Cys-171-Cys-230, Cys-184-Cys-240, Cys-243-Cys-363, Cys-279-Cys-295, Cys-408-Cys-424, and Cys-435-Cys-463. The Ca(2+) site is built by Asp-133, Val-135, Asp-143, and Glu-144. In terms of domain architecture, SRCR spans 150 to 242 (LYGQSFILQV…RMVVSLRCIE (93 aa)). A glycan (N-linked (GlcNAc...) asparagine) is linked at Asn-212. Positions 254-487 (IVGGLNASPG…FTDWIYQQMR (234 aa)) constitute a Peptidase S1 domain. Active-site charge relay system residues include His-294 and Asp-343. Catalysis depends on Ser-439, which acts as the Charge relay system. The N-linked (GlcNAc...) asparagine glycan is linked to Asn-474.

It belongs to the peptidase S1 family. As to quaternary structure, the catalytically active form interacts with ACE2. Post-translationally, proteolytically processed; by an autocatalytic mechanism. Autocleavage induces active conformation. Larynx, trachea and bronchi, lung, prostate and kidney.

Its subcellular location is the cell membrane. It localises to the secreted. It carries out the reaction The enzyme cleaves angiotensin-converting enzyme 2 (EC 3.4.17.23) and cleaves influenzea A and B virus and coronavirus spike glycoproteins at arginine residues.. Functionally, plasma membrane-anchored serine protease that cleaves at arginine residues. Participates in proteolytic cascades of relevance for the normal physiologic function of the prostate. Androgen-induced TMPRSS2 activates several substrates that include pro-hepatocyte growth factor/HGF, the protease activated receptor-2/F2RL1 or matriptase/ST14 leading to extracellular matrix disruption. In addition, activates trigeminal neurons and contribute to both spontaneous pain and mechanical allodynia. Its function is as follows. (Microbial infection) Essential for spread and pathogenesis of influenza A virus (strains H1N1, H3N2 and H7N9) and is involved in proteolytic cleavage and activation of hemagglutinin (HA) protein which is essential for viral infectivity. The chain is Transmembrane protease serine 2 (Tmprss2) from Mus musculus (Mouse).